The chain runs to 142 residues: COA8 family protein Y39B6A.34, mitochondrial (142 aa).

This sequence belongs to the COA8 family.

It localises to the mitochondrion inner membrane. Functionally, may be required for cytochrome c complex (COX) assembly and function, COX being the terminal component of the mitochondrial respiratory chain. The chain is COA8 family protein Y39B6A.34, mitochondrial from Caenorhabditis elegans.